A 355-amino-acid chain; its full sequence is Uroporphyrinogen decarboxylase (355 aa).

Substrate-binding positions include 27-31 (RQAGR), phenylalanine 46, aspartate 77, tyrosine 154, serine 209, and histidine 327.

This sequence belongs to the uroporphyrinogen decarboxylase family. In terms of assembly, homodimer.

The protein resides in the cytoplasm. The catalysed reaction is uroporphyrinogen III + 4 H(+) = coproporphyrinogen III + 4 CO2. It functions in the pathway porphyrin-containing compound metabolism; protoporphyrin-IX biosynthesis; coproporphyrinogen-III from 5-aminolevulinate: step 4/4. Catalyzes the decarboxylation of four acetate groups of uroporphyrinogen-III to yield coproporphyrinogen-III. The chain is Uroporphyrinogen decarboxylase from Nitrosomonas europaea (strain ATCC 19718 / CIP 103999 / KCTC 2705 / NBRC 14298).